The primary structure comprises 361 residues: Prostaglandin D2 receptor (361 aa).

The Extracellular segment spans residues 1-21; the sequence is MRPLFYRCHNTTSVEKGNSAT. Asn-10 is a glycosylation site (N-linked (GlcNAc...) asparagine). The helical transmembrane segment at 22-42 threads the bilayer; the sequence is MGGVLFSTGLVGNLLALGLLA. Over 43–58 the chain is Cytoplasmic; the sequence is RSGLGSCPPRSPRPPP. The chain crosses the membrane as a helical span at residues 59–79; that stretch reads SVFYVLVFGLTITDLLGKCLV. Topologically, residues 80–107 are extracellular; the sequence is SPFVLSAYAQNRSLRELVPGSDSSLCQA. A glycan (N-linked (GlcNAc...) asparagine) is linked at Asn-90. Cysteines 105 and 183 form a disulfide. A helical transmembrane segment spans residues 108 to 128; the sequence is FAFIMSFFGLASTLQLLAMAL. The Cytoplasmic portion of the chain corresponds to 129–150; the sequence is ECWLSLGHPFFHRRHLTPRRGA. Residues 151–171 traverse the membrane as a helical segment; sequence MVAPVVGAFCLAFCALPLVGF. Over 172–195 the chain is Extracellular; the sequence is GKFVQYCPGTWCFFQMVHEERSLS. A helical transmembrane segment spans residues 196–216; that stretch reads VLSYSVLYASLMLLLVLAIVL. The Cytoplasmic portion of the chain corresponds to 217–262; the sequence is CNLSAMRNLYAMHLRLRGLLRPGSRERAEPGAGEREATPLHLEELD. The chain crosses the membrane as a helical span at residues 263-283; that stretch reads HLLLLALMTVLFTMCSLPLIY. Residues 284-310 lie on the Extracellular side of the membrane; it reads RAYYGAFKAVPEQNGTTEETEDLRALR. Asn-297 is a glycosylation site (N-linked (GlcNAc...) asparagine). Residues 311-331 form a helical membrane-spanning segment; sequence FLSVISIVDPWIFIIFRTSVF. Over 332-361 the chain is Cytoplasmic; it reads RMFFRKIFIRPLIYRNWHSNSCQTNMESSL.

The protein belongs to the G-protein coupled receptor 1 family.

The protein localises to the cell membrane. In terms of biological role, receptor for prostaglandin D2 (PGD2). The activity of this receptor is mainly mediated by G(s) proteins that stimulate adenylate cyclase, resulting in an elevation of intracellular cAMP. A mobilization of calcium is also observed, but without formation of inositol 1,4,5-trisphosphate. Involved in PLA2G3-dependent maturation of mast cells. PLA2G3 is secreted by immature mast cells and acts on nearby fibroblasts upstream to PTDGS to synthesize PGD2, which in turn promotes mast cell maturation and degranulation via PTGDR. In Bos taurus (Bovine), this protein is Prostaglandin D2 receptor (PTGDR).